The sequence spans 1069 residues: Structural polyprotein (1069 aa).

Residue Asp28 participates in a divalent metal cation binding. A disordered region spans residues 504 to 534 (THPKLVPPTEREPNSTPDGHKITGAKTKDNT). Basic and acidic residues predominate over residues 512-534 (TEREPNSTPDGHKITGAKTKDNT). In terms of domain architecture, Peptidase S50 spans 558–791 (ADLPISLLQT…AFQGWFYCGA (234 aa)). Catalysis depends on Ser692, which acts as the Nucleophile. Lys729 is an active-site residue. 2 disordered regions span residues 876–900 (LPHE…STRM) and 1031–1069 (SGAA…TTLS).

In terms of assembly, homotrimer. A central divalent metal stabilizes the VP2 trimer. As to quaternary structure, homodimer. Interacts (via C-terminus) with VP1 in the cytoplasm. Interacts with VP2. Post-translationally, specific enzymatic cleavages yield mature proteins. The capsid assembly seems to be regulated by polyprotein processing. The protease VP4 cleaves itself off the polyprotein, thus releasing pre-VP2 and VP3 within the infected cell. During capsid assembly, the C-terminus of pre-VP2 is further processed by VP4, giving rise to VP2, the external capsid protein and three small peptides that all stay closely associated with the capsid. The N-termini of VP2 and VP3 are blocked.

It localises to the virion. The protein localises to the host cytoplasm. Capsid protein VP2 self assembles to form an icosahedral capsid with a T=13 symmetry, about 70 nm in diameter, and consisting of 260 VP2 trimers. The capsid encapsulates the genomic dsRNA. VP2 is also involved in attachment and entry into the host cell. In terms of biological role, the precursor of VP2 plays an important role in capsid assembly. First, pre-VP2 and VP2 oligomers assemble to form a procapsid. Then, the pre-VP2 intermediates may be processed into VP2 proteins by proteolytic cleavage mediated by VP4 to obtain the mature virion. The final capsid is composed of pentamers and hexamers but VP2 has a natural tendency to assemble into all-pentameric structures. Therefore pre-VP2 may be required to allow formation of the hexameric structures. Functionally, protease VP4 is a serine protease that cleaves the polyprotein into its final products. Pre-VP2 is first partially cleaved, and may be completely processed by VP4 upon capsid maturation. Its function is as follows. Capsid protein VP3 plays a key role in virion assembly by providing a scaffold for the capsid made of VP2. May self-assemble to form a T=4-like icosahedral inner-capsid composed of at least 180 trimers. Plays a role in genomic RNA packaging by recruiting VP1 into the capsid and interacting with the dsRNA genome segments to form a ribonucleoprotein complex. Additionally, the interaction of the VP3 C-terminal tail with VP1 removes the inherent structural blockade of the polymerase active site. Thus, VP3 can also function as a transcriptional activator. Structural peptide 1 is a small peptide derived from pre-VP2 C-terminus. It destabilizes and perforates cell membranes, suggesting a role during entry. In terms of biological role, structural peptide 2 is a small peptide derived from pre-VP2 C-terminus. It is not essential for the virus viability, but viral growth is affected when missing. Functionally, structural peptide 3 is a small peptide derived from pre-VP2 C-terminus. It is not essential for the virus viability, but viral growth is affected when missing. Its function is as follows. Structural peptide 4 is a small peptide derived from pre-VP2 C-terminus. It is essential for the virus viability. The polypeptide is Structural polyprotein (Channa lucius (Forest snakehead)).